The sequence spans 203 residues: 2-phospho-L-lactate guanylyltransferase (203 aa).

The protein belongs to the CofC family. As to quaternary structure, homodimer.

The catalysed reaction is (2S)-2-phospholactate + GTP + H(+) = (2S)-lactyl-2-diphospho-5'-guanosine + diphosphate. It functions in the pathway cofactor biosynthesis; coenzyme F420 biosynthesis. Guanylyltransferase that catalyzes the activation of (2S)-2-phospholactate (2-PL) as (2S)-lactyl-2-diphospho-5'-guanosine, via the condensation of 2-PL with GTP. It is involved in the biosynthesis of coenzyme F420, a hydride carrier cofactor. This Halomicrobium mukohataei (strain ATCC 700874 / DSM 12286 / JCM 9738 / NCIMB 13541) (Haloarcula mukohataei) protein is 2-phospho-L-lactate guanylyltransferase.